The chain runs to 228 residues: Ephrin-A5 (228 aa).

Positions 1-20 (MLHVEMLTLVFLVLWMCVFS) are cleaved as a signal peptide. One can recognise an Ephrin RBD domain in the interval 29–162 (ADRYAVYWNS…KLKVFVRPTN (134 aa)). N-linked (GlcNAc...) asparagine glycosylation occurs at asparagine 37. 2 cysteine pairs are disulfide-bonded: cysteine 62–cysteine 102 and cysteine 90–cysteine 151. Residues 186–205 (EPADDTVHESAEPSRGENAA) form a disordered region. Over residues 190–200 (DTVHESAEPSR) the composition is skewed to basic and acidic residues. Asparagine 203 is lipidated: GPI-anchor amidated asparagine. A propeptide spans 204–228 (AAQTPRIPSRLLAILLFLLAMLLTL) (removed in mature form).

This sequence belongs to the ephrin family. As to quaternary structure, binds to EPHB2. Interacts with EPHA8; activates EPHA8. Binds to the receptor tyrosine kinases EPHA2, EPHA3 and EPHB1. Forms a ternary EFNA5-EPHA3-ADAM10 complex mediating EFNA5 extracellular domain shedding by ADAM10 which regulates the EFNA5-EPHA3 complex internalization and function.

The protein resides in the cell membrane. The protein localises to the membrane. Its subcellular location is the caveola. Cell surface GPI-bound ligand for Eph receptors, a family of receptor tyrosine kinases which are crucial for migration, repulsion and adhesion during neuronal, vascular and epithelial development. Binds promiscuously Eph receptors residing on adjacent cells, leading to contact-dependent bidirectional signaling into neighboring cells. The signaling pathway downstream of the receptor is referred to as forward signaling while the signaling pathway downstream of the ephrin ligand is referred to as reverse signaling. Induces compartmentalized signaling within a caveolae-like membrane microdomain when bound to the extracellular domain of its cognate receptor. This signaling event requires the activity of the Fyn tyrosine kinase. Activates the EPHA3 receptor to regulate cell-cell adhesion and cytoskeletal organization. With the receptor EPHA2 may regulate lens fiber cells shape and interactions and be important for lens transparency maintenance. May function actively to stimulate axon fasciculation. The interaction of EFNA5 with EPHA5 also mediates communication between pancreatic islet cells to regulate glucose-stimulated insulin secretion. Cognate/functional ligand for EPHA7, their interaction regulates brain development modulating cell-cell adhesion and repulsion. This chain is Ephrin-A5 (EFNA5), found in Homo sapiens (Human).